Consider the following 283-residue polypeptide: Acetylglutamate kinase (283 aa).

Residues 64-65 (GG), arginine 86, and asparagine 178 each bind substrate.

The protein belongs to the acetylglutamate kinase family. ArgB subfamily.

It localises to the cytoplasm. It catalyses the reaction N-acetyl-L-glutamate + ATP = N-acetyl-L-glutamyl 5-phosphate + ADP. Its pathway is amino-acid biosynthesis; L-arginine biosynthesis; N(2)-acetyl-L-ornithine from L-glutamate: step 2/4. Its function is as follows. Catalyzes the ATP-dependent phosphorylation of N-acetyl-L-glutamate. In Lactococcus lactis subsp. lactis (strain IL1403) (Streptococcus lactis), this protein is Acetylglutamate kinase.